Consider the following 729-residue polypeptide: Solute carrier family 15 member 2 (729 aa).

The segment at 1–34 is disordered; the sequence is MNPFQKNESKETLFSPVSIEEVPPRPPSPPKKPS. At 1–57 the chain is on the cytoplasmic side; that stretch reads MNPFQKNESKETLFSPVSIEEVPPRPPSPPKKPSPTICGSNYPLSIAFIVVNEFCER. Ser9 is modified (phosphoserine). Thr12 is modified (phosphothreonine). Residues 24 to 33 show a composition bias toward pro residues; sequence PRPPSPPKKP. Ser28 carries the post-translational modification Phosphoserine. The chain crosses the membrane as a helical span at residues 58–78; it reads FSYYGMKAVLILYFLYFLHWN. At 79-83 the chain is on the extracellular side; the sequence is EDTST. A helical membrane pass occupies residues 84 to 104; it reads SIYHAFSSLCYFTPILGAAIA. Residues 105 to 113 are Cytoplasmic-facing; sequence DSWLGKFKT. Residues 114-134 traverse the membrane as a helical segment; the sequence is IIYLSLVYVLGHVIKSLGALP. Over 135–139 the chain is Extracellular; that stretch reads ILGGQ. Residues 140–160 form a helical membrane-spanning segment; sequence VVHTVLSLIGLSLIALGTGGI. Topologically, residues 161–183 are cytoplasmic; the sequence is KPCVAAFGGDQFEEKHAEERTRY. A helical transmembrane segment spans residues 184 to 204; it reads FSVFYLSINAGSLISTFITPM. The Extracellular portion of the chain corresponds to 205-217; that stretch reads LRGDVQCFGEDCY. Residues 218–238 form a helical membrane-spanning segment; sequence ALAFGVPGLLMVIALVVFAMG. At 239–295 the chain is on the cytoplasmic side; the sequence is SKIYNKPPPEGNIVAQVFKCIWFAISNRFKNRSGDIPKRQHWLDWAAEKYPKQLIMD. A helical membrane pass occupies residues 296 to 316; the sequence is VKALTRVLFLYIPLPMFWALL. Topologically, residues 317-343 are extracellular; it reads DQQGSRWTLQAIRMNRNLGFFVLQPDQ. A helical transmembrane segment spans residues 344–364; it reads MQVLNPLLVLIFIPLFDFVIY. The Cytoplasmic portion of the chain corresponds to 365–380; the sequence is RLVSKCGINFSSLRKM. Residues 381-401 traverse the membrane as a helical segment; sequence AVGMILACLAFAVAAAVEIKI. Topologically, residues 402–611 are extracellular; that stretch reads NEMAPAQPGP…PANKMSIAWQ (210 aa). An extracellular domain (ECD) region spans residues 402-611; the sequence is NEMAPAQPGP…PANKMSIAWQ (210 aa). N-linked (GlcNAc...) asparagine glycans are attached at residues Asn435, Asn472, Asn528, Asn567, and Asn587. Residues 612–632 traverse the membrane as a helical segment; it reads LPQYALVTAGEVMFSVTGLEF. The Cytoplasmic portion of the chain corresponds to 633 to 643; it reads SYSQAPSSMKS. A helical membrane pass occupies residues 644-664; sequence VLQAAWLLTIAVGNIIVLVVA. Over 665-674 the chain is Extracellular; sequence QFSGLVQWAE. A helical membrane pass occupies residues 675-695; it reads FILFSCLLLVICLIFSIMGYY. The Cytoplasmic portion of the chain corresponds to 696-729; that stretch reads YVPVKTEDMRGPADKHIPHIQGNMIKLETKKTKL.

It belongs to the major facilitator superfamily. Proton-dependent oligopeptide transporter (POT/PTR) (TC 2.A.17) family. In terms of assembly, interacts (via extracellular domain region) with trypsin. Expressed in kidney. Not detected in intestine. Highly expressed in macrophages.

It localises to the apical cell membrane. Its subcellular location is the cytoplasmic vesicle. It is found in the phagosome membrane. The protein localises to the cell membrane. It catalyses the reaction a dipeptide(out) + 2 H(+)(out) = a dipeptide(in) + 2 H(+)(in). It carries out the reaction N-acetyl-D-muramoyl-L-alanyl-D-isoglutamine(out) + 3 H(+)(out) = N-acetyl-D-muramoyl-L-alanyl-D-isoglutamine(in) + 3 H(+)(in). The enzyme catalyses glycyl-L-leucine(out) + 2 H(+)(out) = glycyl-L-leucine(in) + 2 H(+)(in). The catalysed reaction is glycyl-L-lysine(out) + 2 H(+)(out) = glycyl-L-lysine(in) + 2 H(+)(in). It catalyses the reaction glycyl-L-glutamate(out) + 3 H(+)(out) = glycyl-L-glutamate(in) + 3 H(+)(in). It carries out the reaction L-alanyl-L-alanine(out) + 2 H(+)(out) = L-alanyl-L-alanine(in) + 2 H(+)(in). The enzyme catalyses an L-amino acid tripeptide(out) + 2 H(+)(out) = an L-amino acid tripeptide(in) + 2 H(+)(in). The catalysed reaction is carnosine(out) + 2 H(+)(out) = carnosine(in) + 2 H(+)(in). Its function is as follows. Proton-coupled amino-acid transporter that transports oligopeptides of 2 to 4 amino acids with a preference for dipeptides. Transports neutral and anionic dipeptides with a proton to peptide stoichiometry of 2:1 or 3:1. In kidney, involved in the absorption of circulating di- and tripeptides from the glomerular filtrate. Can also transport beta-lactam antibiotics, such as the aminocephalosporin cefadroxil, and other antiviral and anticancer drugs. Transports the dipeptide-like aminopeptidase inhibitor bestatin. Also able to transport carnosine. Involved in innate immunity by promoting the detection of microbial pathogens by NOD-like receptors (NLRs). Mediates transport of bacterial peptidoglycans across the plasma membrane or, in macrophages, the phagosome membrane: catalyzes the transport of certain bacterial peptidoglycans, such as muramyl dipeptide (MDP), the NOD2 ligand. The protein is Solute carrier family 15 member 2 of Homo sapiens (Human).